A 425-amino-acid polypeptide reads, in one-letter code: Adenylosuccinate synthetase (425 aa).

Residues 12–18 (GDEGKGK) and 40–42 (GHT) contribute to the GTP site. Aspartate 13 acts as the Proton acceptor in catalysis. Residues aspartate 13 and glycine 40 each contribute to the Mg(2+) site. Residues 13 to 16 (DEGK), 38 to 41 (NAGH), threonine 127, arginine 141, glutamine 222, threonine 237, and arginine 301 contribute to the IMP site. The Proton donor role is filled by histidine 41. 297-303 (AVTGRPR) is a binding site for substrate. GTP is bound by residues arginine 303, 329–331 (KID), and 411–413 (SVG).

This sequence belongs to the adenylosuccinate synthetase family. In terms of assembly, homodimer. Mg(2+) is required as a cofactor.

The protein resides in the cytoplasm. It carries out the reaction IMP + L-aspartate + GTP = N(6)-(1,2-dicarboxyethyl)-AMP + GDP + phosphate + 2 H(+). The protein operates within purine metabolism; AMP biosynthesis via de novo pathway; AMP from IMP: step 1/2. Its function is as follows. Plays an important role in the de novo pathway of purine nucleotide biosynthesis. Catalyzes the first committed step in the biosynthesis of AMP from IMP. The polypeptide is Adenylosuccinate synthetase (Fusobacterium nucleatum subsp. nucleatum (strain ATCC 25586 / DSM 15643 / BCRC 10681 / CIP 101130 / JCM 8532 / KCTC 2640 / LMG 13131 / VPI 4355)).